The primary structure comprises 216 residues: Guanylate kinase (216 aa).

The Guanylate kinase-like domain occupies 11–189; sequence GVLIVISGPS…AVKKIEAILL (179 aa). ATP is bound at residue 18-25; the sequence is GPSGAGKG.

This sequence belongs to the guanylate kinase family.

It is found in the cytoplasm. The enzyme catalyses GMP + ATP = GDP + ADP. In terms of biological role, essential for recycling GMP and indirectly, cGMP. The protein is Guanylate kinase of Clostridium perfringens (strain SM101 / Type A).